The primary structure comprises 596 residues: Delta(24(24(1)))-sterol reductase (596 aa).

The disordered stretch occupies residues M1–S122. The segment covering N98 to N112 has biased composition (gly residues). 8 helical membrane passes run F168–A188, V225–G245, W269–L289, F296–F316, M353–A373, Y381–A401, G419–I439, and G454–N474. NADP(+) is bound by residues K477, R481, L516, and H528 to Y529. A helical membrane pass occupies residues F535–F557. NADP(+) contacts are provided by residues D568, C572–Y576, and Y583.

Belongs to the ERG4/ERG24 family.

Its subcellular location is the endoplasmic reticulum membrane. It catalyses the reaction ergosterol + NADP(+) = ergosta-5,7,22,24(28)-tetraen-3beta-ol + NADPH + H(+). It participates in steroid metabolism; ergosterol biosynthesis. Functionally, delta(24(24(1)))-sterol reductase; part of the third module of ergosterol biosynthesis pathway that includes the late steps of the pathway. ERG4 catalyzes the last step of ergosterol biosynthesis by converting ergosta-5,7,22,24(28)-tetraen-3beta-ol into ergosterol. The third module or late pathway involves the ergosterol synthesis itself through consecutive reactions that mainly occur in the endoplasmic reticulum (ER) membrane. Firstly, the squalene synthase ERG9 catalyzes the condensation of 2 farnesyl pyrophosphate moieties to form squalene, which is the precursor of all steroids. Squalene synthase is crucial for balancing the incorporation of farnesyl diphosphate (FPP) into sterol and nonsterol isoprene synthesis. Secondly, squalene is converted into lanosterol by the consecutive action of the squalene epoxidase ERG1 and the lanosterol synthase ERG7. Then, the delta(24)-sterol C-methyltransferase ERG6 methylates lanosterol at C-24 to produce eburicol. Eburicol is the substrate of the sterol 14-alpha demethylase encoded by CYP51A, CYP51B and CYP51C, to yield 4,4,24-trimethyl ergosta-8,14,24(28)-trienol. CYP51B encodes the enzyme primarily responsible for sterol 14-alpha-demethylation, and plays an essential role in ascospore formation. CYP51A encodes an additional sterol 14-alpha-demethylase, induced on ergosterol depletion and responsible for the intrinsic variation in azole sensitivity. The third CYP51 isoform, CYP51C, does not encode a sterol 14-alpha-demethylase, but is required for full virulence on host wheat ears. The C-14 reductase ERG24 then reduces the C14=C15 double bond which leads to 4,4-dimethylfecosterol. A sequence of further demethylations at C-4, involving the C-4 demethylation complex containing the C-4 methylsterol oxidases ERG25, the sterol-4-alpha-carboxylate 3-dehydrogenase ERG26 and the 3-keto-steroid reductase ERG27, leads to the production of fecosterol via 4-methylfecosterol. ERG28 has a role as a scaffold to help anchor ERG25, ERG26 and ERG27 to the endoplasmic reticulum. The C-8 sterol isomerase ERG2 then catalyzes the reaction which results in unsaturation at C-7 in the B ring of sterols and thus converts fecosterol to episterol. The sterol-C5-desaturases ERG3A and ERG3BB then catalyze the introduction of a C-5 double bond in the B ring to produce 5-dehydroepisterol. The C-22 sterol desaturases ERG5A and ERG5B further convert 5-dehydroepisterol into ergosta-5,7,22,24(28)-tetraen-3beta-ol by forming the C-22(23) double bond in the sterol side chain. Finally, ergosta-5,7,22,24(28)-tetraen-3beta-ol is substrate of the C-24(28) sterol reductase ERG4 to produce ergosterol. This Gibberella zeae (strain ATCC MYA-4620 / CBS 123657 / FGSC 9075 / NRRL 31084 / PH-1) (Wheat head blight fungus) protein is Delta(24(24(1)))-sterol reductase.